Reading from the N-terminus, the 891-residue chain is uncharacterized protein (891 aa).

A compositionally biased stretch (basic and acidic residues) spans 48-64 (GHKKPRSESRKKYDAKK). A disordered region spans residues 48-86 (GHKKPRSESRKKYDAKKQHQSSHFATPVKGVESSEPTEK). Residues S261, S263, S265, and S268 each carry the phosphoserine modification. Residues 795-822 (QRTFSNESPRAVDSGFSRTSTPFSESTS) form a disordered region. Polar residues predominate over residues 810 to 822 (FSRTSTPFSESTS).

It is found in the nucleus. This is an uncharacterized protein from Schizosaccharomyces pombe (strain 972 / ATCC 24843) (Fission yeast).